A 590-amino-acid polypeptide reads, in one-letter code: Probable lysine-specific demethylase 4B (590 aa).

The JmjN domain occupies isoleucine 9–arginine 51. Tyrosine 130 lines the 2-oxoglutarate pocket. The 167-residue stretch at aspartate 140–cysteine 306 folds into the JmjC domain. Residues histidine 186 and glutamate 188 each contribute to the Fe cation site. 2 residues coordinate 2-oxoglutarate: asparagine 196 and lysine 204. The Zn(2+) site is built by cysteine 232 and histidine 238. Lysine 239 contributes to the 2-oxoglutarate binding site. Histidine 274 serves as a coordination point for Fe cation. The Zn(2+) site is built by cysteine 304 and cysteine 306. Disordered regions lie at residues proline 372–asparagine 395 and alanine 417–proline 590. Residues glutamate 445–glutamate 458 show a composition bias toward acidic residues. The span at serine 480 to proline 494 shows a compositional bias: basic residues. Composition is skewed to low complexity over residues isoleucine 502 to arginine 513 and threonine 537 to alanine 571.

The protein belongs to the JHDM3 histone demethylase family. Fe(2+) serves as cofactor.

Its subcellular location is the nucleus. It carries out the reaction N(6),N(6),N(6)-trimethyl-L-lysyl(9)-[histone H3] + 2 2-oxoglutarate + 2 O2 = N(6)-methyl-L-lysyl(9)-[histone H3] + 2 formaldehyde + 2 succinate + 2 CO2. Functionally, probable histone demethylase that specifically demethylates 'Lys-9' and 'Lys-36' residues of histone H3, thereby playing a central role in histone code. Demethylation of Lys residue generates formaldehyde and succinate. This chain is Probable lysine-specific demethylase 4B (Kdm4B), found in Drosophila melanogaster (Fruit fly).